The sequence spans 227 residues: Type II restriction enzyme ScaI (227 aa).

Residues 12-35 (EARVGTRTGGPAMRPKTSDSPYFG) are disordered.

It catalyses the reaction Endonucleolytic cleavage of DNA to give specific double-stranded fragments with terminal 5'-phosphates.. Its function is as follows. A P subtype restriction enzyme that recognizes the double-stranded sequence 5'-AGTACT-3' and cleaves after T-3. This chain is Type II restriction enzyme ScaI, found in Streptomyces caespitosus.